Consider the following 703-residue polypeptide: Zinc finger protein 750 (703 aa).

Residues 25-51 (YKCFQCPFTCNEKSHLFNHMKYGLCKN) form a CCHC-type zinc finger. Zn(2+)-binding residues include C27, C30, H43, and C49. Disordered stretches follow at residues 64-113 (KCPK…DAKE), 350-527 (PASS…YGPM), 553-614 (WAPR…KQTA), and 630-703 (RVAD…TRVS). The span at 67–106 (KSSSLDPKQTHQPEPTSKPATSKSLLNGLSSFDPKSQQGS) shows a compositional bias: polar residues. The segment covering 352–361 (SSPSELNLSS) has biased composition (low complexity). Residues 367 to 394 (TECEKGSPVPEAKDPSKDGQRDAEEAKM) are compositionally biased toward basic and acidic residues. 2 stretches are compositionally biased toward polar residues: residues 410–421 (SPTNFTQTSQTF) and 456–477 (GSESPHSQPPANRTESPKSLQA). Residues 574–611 (TETKGSEDRTSRVETPQDKAHSRTTPDVHTEDSSDEQK) show a composition bias toward basic and acidic residues. Over residues 639-655 (QEPTRQDVPTLSATENL) the composition is skewed to polar residues.

Its subcellular location is the nucleus. Its function is as follows. Transcription factor involved in epidermis differentiation. Required for terminal epidermal differentiation: acts downstream of p63/TP63 and activates expression of late epidermal differentiation genes. Specifically binds to the promoter of KLF4 and promotes its expression. The protein is Zinc finger protein 750 (Znf750) of Mus musculus (Mouse).